Consider the following 450-residue polypeptide: MNNKRHSTNEQLSLDEINNTIKFDHRSSNKQKFLSFLGPGLLVAVGYMDPGNWITSMQGGAQYGYTLLFVILISSLSAMLLQSMTVRLGIATGMDLAQMTRHYLSRPIAIIFWIIAELAIIATDIAEVIGSAIALNLLFNIPLIVGALITVLDVFLLLFIMKYGFRKIEAIVGTLIFTVLFIFIFEVYISSPQLNAVLNGFIPHSEIITNNGILYIALGIIGATIMPHNLYLHSSIVQSRTYSRHNNEEKAQAIKFATIDSNIQLSIAFVVNCLLLVLGASLFFNSNADDLGGFYDLYHALKTEPVLGATMGAIMSTLFAVALLASGQNSTITGTLAGQIVMEGFLRLHIPNWLRRLITRSLAVIPVIVCLIIFKGNAAKIEQLLVFSQVFLSIALPFCLIPLQLATSNKDLMGPFYNKTWVNIISWTLIIILSILNVYLIVQTFQELQS.

Transmembrane regions (helical) follow at residues 34-54, 61-81, 108-128, 141-161, 170-190, 212-232, 263-283, 305-325, 361-381, 383-403, and 422-442; these read LSFL…GNWI, AQYG…AMLL, IAII…IAEV, IPLI…LFIM, AIVG…VYIS, GILY…NLYL, IQLS…ASLF, PVLG…ALLA, SLAV…AAKI, QLLV…LIPL, and VNII…YLIV.

It belongs to the NRAMP family.

It is found in the cell membrane. Its function is as follows. H(+)-stimulated, divalent metal cation uptake system. The protein is Divalent metal cation transporter MntH of Staphylococcus aureus (strain JH1).